The following is a 223-amino-acid chain: MKNIQKNIKKLKQKITNISKKFKINTQKIKLLAVSKNRSVNDIKKAILCGQNSFGENYVQESQPKIKLFNNIEWHYIGQIQSNKAHIIAKNFSWCHTITNKKTAVLLNKYRPYSLPKLNTLIQINIRDNTINIDDDIETIKQLAKTINSLDNLNLRGIMAMPYFKNTYLEQIQSYKYIHLYFDILKKKYTYIDTVSLGTSHDIQAALYSGSTLLRIGSSIFDV.

Lys-36 bears the N6-(pyridoxal phosphate)lysine mark.

It belongs to the pyridoxal phosphate-binding protein YggS/PROSC family. As to quaternary structure, monomer.

Pyridoxal 5'-phosphate (PLP)-binding protein, which is involved in PLP homeostasis. The sequence is that of Pyridoxal phosphate homeostasis protein from Buchnera aphidicola subsp. Baizongia pistaciae (strain Bp).